A 149-amino-acid polypeptide reads, in one-letter code: Ribonuclease pancreatic (149 aa).

Positions 1-25 are cleaved as a signal peptide; the sequence is MGLEKSLILFPLFFLLLGWVQPSLG. Residues lysine 32 and arginine 35 each contribute to the substrate site. Residue histidine 37 is the Proton acceptor of the active site. Disulfide bonds link cysteine 51–cysteine 109, cysteine 65–cysteine 120, cysteine 83–cysteine 135, and cysteine 90–cysteine 97. Residues 66-70 and lysine 91 each bind substrate; that span reads KPVNT. Residue histidine 144 is the Proton donor of the active site.

Belongs to the pancreatic ribonuclease family. Monomer. Interacts with and forms tight 1:1 complexes with RNH1. Dimerization of two such complexes may occur. Interaction with RNH1 inhibits this protein. Pancreas.

Its subcellular location is the secreted. It carries out the reaction an [RNA] containing cytidine + H2O = an [RNA]-3'-cytidine-3'-phosphate + a 5'-hydroxy-ribonucleotide-3'-[RNA].. The catalysed reaction is an [RNA] containing uridine + H2O = an [RNA]-3'-uridine-3'-phosphate + a 5'-hydroxy-ribonucleotide-3'-[RNA].. Functionally, endonuclease that catalyzes the cleavage of RNA on the 3' side of pyrimidine nucleotides. Acts on single-stranded and double-stranded RNA. This chain is Ribonuclease pancreatic (Rnase1), found in Mus musculus (Mouse).